The chain runs to 408 residues: Succinylornithine transaminase (408 aa).

Lys-252 is modified (N6-(pyridoxal phosphate)lysine).

Belongs to the class-III pyridoxal-phosphate-dependent aminotransferase family. AstC subfamily. The cofactor is pyridoxal 5'-phosphate.

It catalyses the reaction N(2)-succinyl-L-ornithine + 2-oxoglutarate = N-succinyl-L-glutamate 5-semialdehyde + L-glutamate. Its pathway is amino-acid degradation; L-arginine degradation via AST pathway; L-glutamate and succinate from L-arginine: step 3/5. Functionally, catalyzes the transamination of N(2)-succinylornithine and alpha-ketoglutarate into N(2)-succinylglutamate semialdehyde and glutamate. Can also act as an acetylornithine aminotransferase. The polypeptide is Succinylornithine transaminase (Salmonella paratyphi B (strain ATCC BAA-1250 / SPB7)).